A 311-amino-acid polypeptide reads, in one-letter code: Pyrimidine-specific ribonucleoside hydrolase RihA (311 aa).

Residue H240 is part of the active site.

It belongs to the IUNH family. RihA subfamily.

Hydrolyzes cytidine or uridine to ribose and cytosine or uracil, respectively. In Salmonella gallinarum (strain 287/91 / NCTC 13346), this protein is Pyrimidine-specific ribonucleoside hydrolase RihA.